The chain runs to 1388 residues: Collagen alpha-1(XV) chain (1388 aa).

The first 27 residues, 1–27, serve as a signal peptide directing secretion; that stretch reads MAPRRNNGQCWCLLMLLSVSTPLPAVT. Residues 66 to 249 form the Laminin G-like domain; sequence AYSFGPGANV…SSASGETSGL (184 aa). A disordered region spans residues 223–250; sequence TVHPDPRTPEELCDPEESSASGETSGLQ. The nonhelical region 1 (NC1) stretch occupies residues 229–555; it reads RTPEELCDPE…WITPAQREHV (327 aa). The span at 240–249 shows a compositional bias: polar residues; sequence SSASGETSGL. O-linked (Xyl...) (chondroitin sulfate) serine glycosylation is found at serine 243 and serine 247. The O-linked (GalNAc...) threonine glycan is linked to threonine 265. Positions 266 to 301 are disordered; it reads QASPKEAKVEPINTPPTPSSPFEDMELSGEPVPEGT. 2 N-linked (GlcNAc...) asparagine glycosylation sites follow: asparagine 306 and asparagine 324. An O-linked (Xyl...) (chondroitin sulfate) serine glycan is attached at serine 343. Tandem repeats lie at residues 358–408, 409–459, 460–509, and 510–555. Residues 358 to 555 are 4 X tandem repeats; it reads AATAAGLAEV…WITPAQREHV (198 aa). The segment at 371-795 is disordered; that stretch reads TAGEAEASSV…VGPPGPRGPP (425 aa). Positions 379–392 are enriched in polar residues; that stretch reads SVPTGGPTLSMSTE. Positions 409-420 are enriched in low complexity; it reads AATAAGEAEALA. Positions 452–472 are enriched in polar residues; that stretch reads GPSSEDSLTTAAAATEVSLST. Residues 510-527 show a composition bias toward low complexity; sequence AAATTEEPLITAGGEESG. Over residues 528 to 540 the composition is skewed to pro residues; sequence SPPPDGPPLPLPT. The tract at residues 556-573 is triple-helical region 1 (COL1); it reads GMKGQAGPKGEKGDAGEE. Positions 574-618 are nonhelical region 2 (NC2); sequence LPGPPEPSGPVGPTAGAEAEGSGLGWGSDVGSGSGDLVGSEQLLR. Over residues 595 to 609 the composition is skewed to gly residues; it reads SGLGWGSDVGSGSGD. Collagen-like domains follow at residues 619–680 and 681–731; these read GPPG…MKGE and KGAR…PPGP. The interval 619-732 is triple-helical region 2 (COL2); that stretch reads GPPGPPGPPG…PGPPGPPGPG (114 aa). The segment covering 620-630 has biased composition (pro residues); sequence PPGPPGPPGLP. An N-linked (GlcNAc...) asparagine glycan is attached at asparagine 687. Residues 716–731 show a composition bias toward pro residues; sequence VMGPPGPPGPPGPPGP. The nonhelical region 3 (NC3) stretch occupies residues 733–763; it reads CTMGLGFEDTEGSGSTQLLNEPKLSRPTAAI. The O-linked (Xyl...) (chondroitin sulfate) serine glycan is linked to serine 745. The tract at residues 764–798 is triple-helical region 3 (COL3); it reads GLKGEKGDRGPKGERGMDGASIVGPPGPRGPPGHI. Residues 766 to 780 show a composition bias toward basic and acidic residues; that stretch reads KGEKGDRGPKGERGM. The interval 799-822 is nonhelical region 4 (NC4); sequence KVLSNSLINITHGFMNFSDIPELV. 2 N-linked (GlcNAc...) asparagine glycosylation sites follow: asparagine 807 and asparagine 814. The Collagen-like 3 domain occupies 823–865; that stretch reads GPPGPDGLPGLPGFPGPRGPKGDTGLPGFPGLKGEQGEKGEPG. The triple-helical region 4 (COL4) stretch occupies residues 823–867; that stretch reads GPPGPDGLPGLPGFPGPRGPKGDTGLPGFPGLKGEQGEKGEPGAI. Positions 827-840 are enriched in pro residues; the sequence is PDGLPGLPGFPGPR. The segment at 827 to 864 is disordered; sequence PDGLPGLPGFPGPRGPKGDTGLPGFPGLKGEQGEKGEP. Residues 868-878 are nonhelical region 5 (NC5); that stretch reads LTEDIPLERLM. Residues 879-927 enclose the Collagen-like 4 domain; the sequence is GKKGEPGMHGAPGPMGPKGPPGHKGEFGLPGRPGRPGLNGLKGTKGDPG. The triple-helical region 5 (COL5) stretch occupies residues 879–949; that stretch reads GKKGEPGMHG…PGPPGPPGAV (71 aa). The nonhelical region 6 (NC6) stretch occupies residues 950 to 983; that stretch reads INIKGAIFPIPVRPHCKMPVDTAHPGSPELITFH. The segment at 984–1013 is triple-helical region 6 (COL6); it reads GVKGEKGSWGLPGSKGEKGDQGAQGPPGPP. 2 disordered regions span residues 988–1016 and 1029–1133; these read EKGSWGLPGSKGEKGDQGAQGPPGPPLDL and ENGD…GSRN. Positions 1014 to 1027 are nonhelical region 7 (NC7); that stretch reads LDLAYLRHFLNNLK. The segment at 1028–1045 is triple-helical region 7 (COL7); sequence GENGDKGFKGEKGEKGDI. The span at 1029-1044 shows a compositional bias: basic and acidic residues; that stretch reads ENGDKGFKGEKGEKGD. An N-linked (GlcNAc...) asparagine glycan is attached at asparagine 1046. The tract at residues 1046-1052 is nonhelical region 8 (NC8); that stretch reads NGSFLMS. Positions 1053 to 1107 are triple-helical region 8 (COL8); the sequence is GPPGLPGNPGPAGQKGETVVGPQGPPGAPGLPGPPGFGRPGDPGPPGPPGPPGPP. 2 stretches are compositionally biased toward pro residues: residues 1075–1107 and 1117–1126; these read QGPPGAPGLPGPPGFGRPGDPGPPGPPGPPGPP and PGPPGPPGQP. The nonhelical region 9 (NC9) stretch occupies residues 1108 to 1117; sequence AILGAAVALP. The triple-helical region 9 (COL9) stretch occupies residues 1118-1132; it reads GPPGPPGQPGLPGSR. The nonhelical region 10 (NC10) stretch occupies residues 1133–1388; sequence NLVTAFSNMD…ENSFMTDARK (256 aa). Cystine bridges form between cysteine 1237-cysteine 1377 and cysteine 1339-cysteine 1369.

This sequence belongs to the multiplexin collagen family. As to quaternary structure, trimer; disulfide-linked. Interacts moderately with EFEMP2. Prolines at the third position of the tripeptide repeating unit (G-X-Y) are hydroxylated in some or all of the chains. In terms of processing, O-glycosylated; with core 1 or possibly core 8 glycans. Contains chondroitin sulfate. Detected in fibroblasts and urine (at protein level). Detected in placenta (at protein level). Expressed predominantly in internal organs such as adrenal gland, pancreas and kidney.

It localises to the secreted. It is found in the extracellular space. Its subcellular location is the extracellular matrix. Structural protein that stabilizes microvessels and muscle cells, both in heart and in skeletal muscle. Its function is as follows. Restin potently inhibits angiogenesis. The sequence is that of Collagen alpha-1(XV) chain (COL15A1) from Homo sapiens (Human).